The primary structure comprises 295 residues: CCAAT-binding factor complex subunit php4 (295 aa).

Residues 1-19 (MESSKSPSEVEKSSSASPA) show a composition bias toward low complexity. Residues 1–69 (MESSKSPSEV…GPTSALSVEE (69 aa)) are disordered. Residues 73-111 (RVREKQYQDTIGKLQKENNELLEQLEMLQAQLKNSTLDS) are a coiled coil. A Nuclear export signal motif is present at residues 93-100 (LLEQLEML). The tract at residues 108–130 (TLDSPKEVEVNSEVVKPDSATTE) is disordered.

Component of tha CCAAT-binding complex composed of at least php2, php3, php4 and php5. Interacts with crm1 and grx4.

The protein localises to the cytoplasm. The protein resides in the nucleus. It localises to the cytoskeleton. Its subcellular location is the spindle pole. Functionally, component of the transcription regulatory CCAAT-binding complex. Required for the reprogramming of the cell for iron use. Down-regulates pcl1, sdh4, and isa1 underlow-iron conditions. The polypeptide is CCAAT-binding factor complex subunit php4 (php4) (Schizosaccharomyces pombe (strain 972 / ATCC 24843) (Fission yeast)).